The sequence spans 468 residues: Cysteine--tRNA ligase (468 aa).

Cysteine 33 provides a ligand contact to Zn(2+). The 'HIGH' region motif lies at 35–45 (ATVQGLPHIGH). Residues cysteine 211, histidine 236, and glutamate 240 each contribute to the Zn(2+) site. The 'KMSKS' region signature appears at 267–271 (KMSKS). ATP is bound at residue lysine 270.

The protein belongs to the class-I aminoacyl-tRNA synthetase family. In terms of assembly, monomer. It depends on Zn(2+) as a cofactor.

It is found in the cytoplasm. It carries out the reaction tRNA(Cys) + L-cysteine + ATP = L-cysteinyl-tRNA(Cys) + AMP + diphosphate. The sequence is that of Cysteine--tRNA ligase from Mycobacterium avium (strain 104).